The sequence spans 359 residues: MSTDPVQVLQPDGFNKSRWTQLPRDVLIGHQAIMQLPDIIADIKPGRSVLLISGGTTREVAGNTVADILKDQYEVRRFVAGKLDADTLEACSQASSSADFLIGVGGGRVIDCAKIVSYKQGKPFISVPTAASHDGIISGRATLPTETGSVSVGAHPPIAVVADTGIISQAPHRLMASGCADVISNYTAILDWELAHRLRGEQISEYAIALSKMTAEILVKDANLIKPGQEEAAWIVVKALVSSGVSMAIAGSSRPASGGEHKFGHALERLMPGAALHGEACGIGSIMTMYLHGGDWREIRSSLARIGAPTTPRELNIPDEVIVEALMKARDIRPERFTILDMGLTRESAEHLVQMLYEE.

NAD(+)-binding positions include 107–111 and 129–132; these read GRVID and TAAS. Aspartate 134 contacts substrate. Residue serine 138 participates in NAD(+) binding. Aspartate 181 lines the substrate pocket. The Zn(2+) site is built by aspartate 181 and histidine 261. A substrate-binding site is contributed by histidine 265. Zn(2+) is bound at residue histidine 277.

The protein belongs to the glycerol-1-phosphate dehydrogenase family. It depends on Zn(2+) as a cofactor.

The protein resides in the cytoplasm. It carries out the reaction sn-glycerol 1-phosphate + NAD(+) = dihydroxyacetone phosphate + NADH + H(+). The catalysed reaction is sn-glycerol 1-phosphate + NADP(+) = dihydroxyacetone phosphate + NADPH + H(+). It participates in membrane lipid metabolism; glycerophospholipid metabolism. Its function is as follows. Catalyzes the NAD(P)H-dependent reduction of dihydroxyacetonephosphate (DHAP or glycerone phosphate) to glycerol 1-phosphate (G1P). The G1P thus generated is used as the glycerophosphate backbone of phospholipids in the cellular membranes of Archaea. In Methanospirillum hungatei JF-1 (strain ATCC 27890 / DSM 864 / NBRC 100397 / JF-1), this protein is Glycerol-1-phosphate dehydrogenase [NAD(P)+].